A 222-amino-acid chain; its full sequence is Voltage-dependent calcium channel gamma-1 subunit (222 aa).

The Cytoplasmic portion of the chain corresponds to 1–10 (MSPTEAPKVR). Residues 11–29 (VTLFCILVGIVLAMTAVVS) form a helical membrane-spanning segment. Over 30-108 (DHWAVLSPHM…TQKEYSISAA (79 aa)) the chain is Extracellular. N-linked (GlcNAc...) asparagine glycans are attached at residues N43 and N79. A disulfide bridge links C57 with C80. A helical membrane pass occupies residues 109–129 (AISVFSLGFLIMGTICALMAF). The Cytoplasmic portion of the chain corresponds to 130-134 (RKKRD). The chain crosses the membrane as a helical span at residues 135-155 (YLLRPASMFYVFAGLCLFVSL). Residues 156–179 (EVMRQSVKRMIDSEDTVWIEYYYS) lie on the Extracellular side of the membrane. A helical transmembrane segment spans residues 180 to 204 (WSFACACAAFVLLFLGGISLLLFSL). The Cytoplasmic segment spans residues 205–222 (PRMPQNPWESCMDAEPEH).

Belongs to the PMP-22/EMP/MP20 family. CACNG subfamily. As to quaternary structure, component of a calcium channel complex consisting of a pore-forming alpha subunit (CACNA1S) and the ancillary subunits CACNB1 or CACNB2, CACNG1 and CACNA2D1. The channel complex contains alpha, beta, gamma and delta subunits in a 1:1:1:1 ratio, i.e. it contains either CACNB1 or CACNB2. In terms of processing, N-glycosylated. Skeletal muscle (at protein level).

The protein localises to the cell membrane. The protein resides in the sarcolemma. Its function is as follows. Regulatory subunit of the voltage-gated calcium channel that gives rise to L-type calcium currents in skeletal muscle. Regulates channel inactivation kinetics. This chain is Voltage-dependent calcium channel gamma-1 subunit (CACNG1), found in Oryctolagus cuniculus (Rabbit).